The sequence spans 118 residues: Ribonuclease P protein component (118 aa).

This sequence belongs to the RnpA family. In terms of assembly, consists of a catalytic RNA component (M1 or rnpB) and a protein subunit.

The enzyme catalyses Endonucleolytic cleavage of RNA, removing 5'-extranucleotides from tRNA precursor.. In terms of biological role, RNaseP catalyzes the removal of the 5'-leader sequence from pre-tRNA to produce the mature 5'-terminus. It can also cleave other RNA substrates such as 4.5S RNA. The protein component plays an auxiliary but essential role in vivo by binding to the 5'-leader sequence and broadening the substrate specificity of the ribozyme. The sequence is that of Ribonuclease P protein component from Shewanella sp. (strain ANA-3).